Here is an 80-residue protein sequence, read N- to C-terminus: OMEGA-myrmeciitoxin(02)-Mg1a (80 aa).

The signal sequence occupies residues 1–30; that stretch reads MKNNYISTCIVYLMAALLLISVISIKECTA. The EGF-like domain maps to 35 to 75; the sequence is YGDPCSDDLKDYCIHGDCFFLKELNQPACRCYTGYYGSRCE. 3 disulfide bridges follow: Cys-39–Cys-52, Cys-47–Cys-63, and Cys-65–Cys-74.

Belongs to the EGF domain peptide family. Expressed by the venom gland.

It localises to the secreted. Its function is as follows. Ant peptide with probable defensive activity which acts as a potent agonist of the mammalian epidermal growth factor receptor (EGFR) (EC(50)=6.3 nM). Mimics, both structurally and functionally, vertebrate epidermal growth factor (EGF) peptide hormones. In vivo, intraplantar injection in mice causes long-lasting (several days) hypersensitivity of the injected paw to both mechanical and thermal stimuli. Its long-lasting effect is unusual for venom toxins whose effects are usually immediate. One possible explanation is that it would reduce the duration of a nest attack, discourage future attacks, or enhance the actions of subsequent exposure to other pain-inducing venom peptides. The chain is OMEGA-myrmeciitoxin(02)-Mg1a from Myrmecia gulosa (Red bulldog ant).